Reading from the N-terminus, the 112-residue chain is uncharacterized protein (112 aa).

This is an uncharacterized protein from Bacillus subtilis (strain 168).